A 545-amino-acid polypeptide reads, in one-letter code: Chaperonin GroEL (545 aa).

Residues 29-32 (TMGP), Lys-50, 86-90 (DGTTT), Gly-414, 477-479 (DAA), and Asp-493 contribute to the ATP site.

The protein belongs to the chaperonin (HSP60) family. Forms a cylinder of 14 subunits composed of two heptameric rings stacked back-to-back. Interacts with the co-chaperonin GroES.

It is found in the cytoplasm. It catalyses the reaction ATP + H2O + a folded polypeptide = ADP + phosphate + an unfolded polypeptide.. Its function is as follows. Together with its co-chaperonin GroES, plays an essential role in assisting protein folding. The GroEL-GroES system forms a nano-cage that allows encapsulation of the non-native substrate proteins and provides a physical environment optimized to promote and accelerate protein folding. This Campylobacter jejuni (strain RM1221) protein is Chaperonin GroEL.